The chain runs to 400 residues: Tryptophan synthase beta chain (400 aa).

N6-(pyridoxal phosphate)lysine is present on Lys90.

Belongs to the TrpB family. In terms of assembly, tetramer of two alpha and two beta chains. It depends on pyridoxal 5'-phosphate as a cofactor.

It carries out the reaction (1S,2R)-1-C-(indol-3-yl)glycerol 3-phosphate + L-serine = D-glyceraldehyde 3-phosphate + L-tryptophan + H2O. The protein operates within amino-acid biosynthesis; L-tryptophan biosynthesis; L-tryptophan from chorismate: step 5/5. The beta subunit is responsible for the synthesis of L-tryptophan from indole and L-serine. This chain is Tryptophan synthase beta chain (trpB), found in Bacillus subtilis (strain 168).